The following is a 371-amino-acid chain: Protein SPATA31F3 (371 aa).

A helical membrane pass occupies residues 7–29 (ILWDVGSSVYTYGSLFIIALIIW). Residues 62-86 (LRVKKRTTKEETEKLQKLLSNMKRQ) adopt a coiled-coil conformation. Polar residues-rich tracts occupy residues 189-203 (LSKV…LSSQ) and 244-266 (PQQQ…SSSS). Disordered regions lie at residues 189–222 (LSKV…STDQ), 240–299 (YHPA…EAEM), and 326–371 (YKSE…KRNI). Phosphoserine is present on residues serine 197 and serine 198. The segment covering 277–287 (QKKRKKTKKLV) has biased composition (basic residues). The segment covering 330-362 (TGAKPKTGEPKKSSAKVRAEEPNLEKHAKDLKA) has biased composition (basic and acidic residues).

This sequence belongs to the SPATA31 family.

It is found in the membrane. This Mus musculus (Mouse) protein is Protein SPATA31F3 (Spata31f3).